The following is a 245-amino-acid chain: Probable phosphatase YcdX (245 aa).

Zn(2+) contacts are provided by H7, H9, H15, H40, E73, H101, H131, D192, and H194.

The protein belongs to the PHP family. In terms of assembly, homotrimer. Requires Zn(2+) as cofactor.

This chain is Probable phosphatase YcdX, found in Escherichia coli O81 (strain ED1a).